Reading from the N-terminus, the 49-residue chain is Large ribosomal subunit protein bL33 (49 aa).

This sequence belongs to the bacterial ribosomal protein bL33 family.

This Moorella thermoacetica (strain ATCC 39073 / JCM 9320) protein is Large ribosomal subunit protein bL33.